A 300-amino-acid chain; its full sequence is Soluble inorganic pyrophosphatase 6, chloroplastic (300 aa).

The N-terminal 66 residues, 1–66 (MAATRVLTAA…CSAIYNPQVK (66 aa)), are a transit peptide targeting the chloroplast. Arginine 140 contributes to the diphosphate binding site. Tyrosine 142 (proton donor) is an active-site residue. The Mg(2+) site is built by aspartate 173, aspartate 178, and aspartate 210.

This sequence belongs to the PPase family. The cofactor is Mg(2+). As to expression, expressed in all tissues tested. Highest expression in flowers, leaves and roots. Lower levels of expression in siliques, stems, ovary, stigma and pollen.

Its subcellular location is the plastid. The protein localises to the chloroplast stroma. It carries out the reaction diphosphate + H2O = 2 phosphate + H(+). Its activity is regulated as follows. Inhibited by NaF. The polypeptide is Soluble inorganic pyrophosphatase 6, chloroplastic (Arabidopsis thaliana (Mouse-ear cress)).